Consider the following 350-residue polypeptide: 26S proteasome non-ATPase regulatory subunit 8 (350 aa).

Residues 1-24 are disordered; that stretch reads MFIKGRAPRAPPRERRRATRGGLR. The residue at position 106 (serine 106) is a Phosphoserine. One can recognise a PCI domain in the interval 162–331; that stretch reads PSFERYMAQL…QQKPEDTTIP (170 aa). A Glycyl lysine isopeptide (Lys-Gly) (interchain with G-Cter in SUMO2) cross-link involves residue lysine 297.

Belongs to the proteasome subunit S14 family. As to quaternary structure, component of the 19S proteasome regulatory particle complex. The 26S proteasome consists of a 20S core particle (CP) and two 19S regulatory subunits (RP). The regulatory particle is made of a lid composed of 9 subunits including PSMD8, a base containing 6 ATPases and few additional components. Interacts with DDI2. Interacts with TASOR.

In terms of biological role, component of the 26S proteasome, a multiprotein complex involved in the ATP-dependent degradation of ubiquitinated proteins. This complex plays a key role in the maintenance of protein homeostasis by removing misfolded or damaged proteins, which could impair cellular functions, and by removing proteins whose functions are no longer required. Therefore, the proteasome participates in numerous cellular processes, including cell cycle progression, apoptosis, or DNA damage repair. This is 26S proteasome non-ATPase regulatory subunit 8 (PSMD8) from Homo sapiens (Human).